A 392-amino-acid polypeptide reads, in one-letter code: Imidazolonepropionase (392 aa).

Positions 69 and 71 each coordinate Fe(3+). Zn(2+)-binding residues include histidine 69 and histidine 71. 4-imidazolone-5-propanoate contacts are provided by arginine 78, tyrosine 136, and histidine 163. Tyrosine 136 lines the N-formimidoyl-L-glutamate pocket. Histidine 226 is a binding site for Fe(3+). Residue histidine 226 coordinates Zn(2+). Residue glutamine 229 participates in 4-imidazolone-5-propanoate binding. Aspartate 302 lines the Fe(3+) pocket. Residue aspartate 302 coordinates Zn(2+). N-formimidoyl-L-glutamate is bound by residues asparagine 304 and glycine 306. Serine 307 is a binding site for 4-imidazolone-5-propanoate.

The protein belongs to the metallo-dependent hydrolases superfamily. HutI family. Requires Zn(2+) as cofactor. It depends on Fe(3+) as a cofactor.

It is found in the cytoplasm. The catalysed reaction is 4-imidazolone-5-propanoate + H2O = N-formimidoyl-L-glutamate. The protein operates within amino-acid degradation; L-histidine degradation into L-glutamate; N-formimidoyl-L-glutamate from L-histidine: step 3/3. In terms of biological role, catalyzes the hydrolytic cleavage of the carbon-nitrogen bond in imidazolone-5-propanoate to yield N-formimidoyl-L-glutamate. It is the third step in the universal histidine degradation pathway. In Salinispora arenicola (strain CNS-205), this protein is Imidazolonepropionase.